Reading from the N-terminus, the 739-residue chain is Prestin (739 aa).

Residues 1 to 76 are Cytoplasmic-facing; sequence MEHVTVSEEP…PILTWLPSYP (76 aa). Residues 77–106 traverse the membrane as a helical segment; that stretch reads LKEYLFGDIVSGISTGVMQLPQGLAYAMLA. At 107-109 the chain is on the extracellular side; it reads AVP. A helical transmembrane segment spans residues 110-127; that stretch reads PVFGLYSSFYPVLLYTFF. Residues 128-138 lie on the Cytoplasmic side of the membrane; it reads GTSKHISIGTF. Residues 139–152 form a helical membrane-spanning segment; sequence AVISLMIGGVAVRE. Residues 153-169 are Extracellular-facing; the sequence is APDSMFMVNGTNSSLVV. Residues Asn161 and Asn164 are each glycosylated (N-linked (GlcNAc...) asparagine). A helical transmembrane segment spans residues 170–199; it reads NIEARDSRRVEVVVALTTLVGIIQFVLGLL. At 200-209 the chain is on the cytoplasmic side; sequence RFGFLAIYLT. The helical transmembrane segment at 210 to 233 threads the bilayer; it reads EPLVRGFTTAAAVHVSVSQLKYLL. Topologically, residues 234-244 are extracellular; the sequence is GVKTARFNGPL. An intramembrane region (helical) is located at residues 245 to 256; it reads SVVYSLDAVLRN. Topologically, residues 257–261 are extracellular; sequence IADTN. Residues 262–285 form a helical membrane-spanning segment; the sequence is IVTLIIGLGCTVFLYIIKQLNERF. Over 286–294 the chain is Cytoplasmic; sequence KKKLLIPIP. A helical transmembrane segment spans residues 295 to 310; the sequence is GEIIVVIVSTGISYGM. The Extracellular segment spans residues 311–335; sequence LMSENYGVDVVGKIPTGLLPPKVPD. The helical transmembrane segment at 336–370 threads the bilayer; the sequence is FSVFPNLFADAVPIAVVGFSITISLAKTFALKYGY. Residues 371-373 are Cytoplasmic-facing; sequence SVD. The helical transmembrane segment at 374–391 threads the bilayer; that stretch reads GNQELIALGLCNFVSSFF. The Extracellular segment spans residues 392–399; the sequence is HTFVVTAS. Residues 400–409 traverse the membrane as a helical segment; the sequence is MSRSLVQEST. Residue Ser401 participates in salicylate binding. Over 410–413 the chain is Cytoplasmic; the sequence is GGHT. Residues 414-435 traverse the membrane as a helical segment; it reads EIAGLLASLLVLLVVVAIGFVF. The Extracellular portion of the chain corresponds to 436 to 439; that stretch reads QPLP. The chain crosses the membrane as a helical span at residues 440–467; that stretch reads TTVLAAIIMVNLLGMFKQTRDIPVLWRK. Residue Ser468 is a topological domain, cytoplasmic. A helical transmembrane segment spans residues 469–484; the sequence is KIELAIWLVSFFASVL. The Extracellular portion of the chain corresponds to 485–486; the sequence is LG. The helical transmembrane segment at 487–507 threads the bilayer; it reads LDYGLAVAMAFAILTVIYRTQ. Positions 508–731 are extended region for STAS domain; the sequence is RPKNVVLGQI…AVLQCKRWRD (224 aa). The Cytoplasmic portion of the chain corresponds to 508–739; it reads RPKNVVLGQI…RDLPVHPNIH (232 aa). The region spanning 528–726 is the STAS domain; it reads EYEEAEECSG…PTIHDAVLQC (199 aa).

Belongs to the SLC26A/SulP transporter (TC 2.A.53) family. Homodimer. Interacts (via STAS domain) with CALM; this interaction is calcium-dependent. Expressed in hair cells of the auditory organs.

Its subcellular location is the cell membrane. It catalyses the reaction oxalate(in) + chloride(out) = oxalate(out) + chloride(in). The enzyme catalyses sulfate(out) + chloride(in) = sulfate(in) + chloride(out). With respect to regulation, sulfate/chloride antiport activity is inhibited by salicylate; this inhibition is reversible. Electrogenic antiporter that exchanges sulfate or oxalate for chloride ion in a strictly coupled manner with a 1:1 stoichiometry. Adopts a dynamic conformation, which alternates between the exposure of the central binding site to the extra- and intracellular solutions leading to an inward-to-outward conformational transition during the transport cycle. Generates voltage-dependent charge movements resembling to the non-linear capacitance (NLC) of the cell membrane, but which are not associated to electromotile activity. The polypeptide is Prestin (Danio rerio (Zebrafish)).